Here is a 145-residue protein sequence, read N- to C-terminus: MTKKYLKVDVVSPLGSVFKGEADMVSLRGSAGEMGIAYGHTELLSTLPAGVVNVRKDQHTDVLYVSGGIVEVTPTRVTIMVDDMERAENLNQAEAEKARVRAKEVLKNPDASKLDIEAANKRLKEADARLKALNSSNGLYYSKDD.

This sequence belongs to the ATPase epsilon chain family. As to quaternary structure, F-type ATPases have 2 components, CF(1) - the catalytic core - and CF(0) - the membrane proton channel. CF(1) has five subunits: alpha(3), beta(3), gamma(1), delta(1), epsilon(1). CF(0) has three main subunits: a, b and c.

It is found in the cell inner membrane. In terms of biological role, produces ATP from ADP in the presence of a proton gradient across the membrane. The polypeptide is ATP synthase epsilon chain (Francisella tularensis subsp. mediasiatica (strain FSC147)).